The chain runs to 443 residues: MQQLAELYPQHISELQSRTKEALSREGIDGLIIHSGQAKRMFLDDNNYPFKCNPQFKAWLPVIDNPNCWLIVNGSDKPKLIFYRPKDFWHKVPPEPNDFWVEQFDVVLLTQADAVEKHLPYDRSRFAYIGEYIEVAKALGFDLVNPDRVLNYLHYQRAYKTDYELVCMRQANALAVAGHNAAAAAFKAGKSEFDINQAYLAAVRQSDNQVPYNNIVALNENSAILHYMEQDVVAPSESRSFLIDAGASFHGYAADITRTYCNGSIPNSSHFAELINGMHQVTLSLADSLKPGVPYSDIHIAAHAQVAQLLHQFDIVNLSPDDILAEQIVSTFFPHGIGHFLGLQVHDVAGHVADDRGTPNPPPAEHPFLRTTRMIEARQVFTIEPGLYFIDSLLADLKSTEKSKFINWDVVDTFRPFGGIRIEDNIIVHRDKNENMTRDLGLN.

Aspartate 244, aspartate 255, histidine 339, glutamate 384, and glutamate 423 together coordinate Mn(2+).

Belongs to the peptidase M24B family. Bacterial-type prolidase subfamily. It depends on Mn(2+) as a cofactor.

It carries out the reaction Xaa-L-Pro dipeptide + H2O = an L-alpha-amino acid + L-proline. Its function is as follows. Splits dipeptides with a prolyl residue in the C-terminal position. This Pseudoalteromonas atlantica (strain T6c / ATCC BAA-1087) protein is Xaa-Pro dipeptidase.